The primary structure comprises 272 residues: Phosphatidylglycerol--prolipoprotein diacylglyceryl transferase (272 aa).

The next 7 helical transmembrane spans lie at 17–37, 59–79, 95–115, 129–149, 176–196, 202–222, and 237–257; these read LAIRWYGLMYLAGFIMFLGFG, MLFFGVLGVILGGRLGYVLFY, WEGGMAFHGGFLGVVVAMWLF, FIAPMIPCGLAAGRIGNFING, SQLYQFAGEGVALFIVLWLFA, MGAVSGVFLIGYGAFRFAAEF, and LSMGQWLSLPMILAGIAMVVW. Arg142 is a binding site for a 1,2-diacyl-sn-glycero-3-phospho-(1'-sn-glycerol).

The protein belongs to the Lgt family.

The protein resides in the cell inner membrane. It catalyses the reaction L-cysteinyl-[prolipoprotein] + a 1,2-diacyl-sn-glycero-3-phospho-(1'-sn-glycerol) = an S-1,2-diacyl-sn-glyceryl-L-cysteinyl-[prolipoprotein] + sn-glycerol 1-phosphate + H(+). The protein operates within protein modification; lipoprotein biosynthesis (diacylglyceryl transfer). Its function is as follows. Catalyzes the transfer of the diacylglyceryl group from phosphatidylglycerol to the sulfhydryl group of the N-terminal cysteine of a prolipoprotein, the first step in the formation of mature lipoproteins. The polypeptide is Phosphatidylglycerol--prolipoprotein diacylglyceryl transferase (Cupriavidus necator (strain ATCC 17699 / DSM 428 / KCTC 22496 / NCIMB 10442 / H16 / Stanier 337) (Ralstonia eutropha)).